Consider the following 290-residue polypeptide: Nucleotide-binding protein BPP4038 (290 aa).

Residue 9 to 16 participates in ATP binding; that stretch reads GISGSGKS. Residue 58–61 participates in GTP binding; that stretch reads DVRS.

It belongs to the RapZ-like family.

Its function is as follows. Displays ATPase and GTPase activities. In Bordetella parapertussis (strain 12822 / ATCC BAA-587 / NCTC 13253), this protein is Nucleotide-binding protein BPP4038.